The chain runs to 519 residues: Putative tyrosine carboxypeptidase MATCAP2 (519 aa).

A disordered region spans residues 63-103 (SKEEKKHRSQKRFSSASSKQHRKPSKSPSSSHSKDPSRMTA). His-330 contributes to the Zn(2+) binding site. The active-site Nucleophile is Glu-331. Residues His-335 and Glu-366 each coordinate Zn(2+).

Zn(2+) serves as cofactor.

Putative tyrosine carboxypeptidase. This Mus musculus (Mouse) protein is Putative tyrosine carboxypeptidase MATCAP2.